The chain runs to 79 residues: Cell division protein ZapB (79 aa).

Positions 3–79 form a coiled coil; sequence LEVFEKLEAK…QALLGRMEEV (77 aa). The residue at position 8 (K8) is an N6-acetyllysine. The interval 34-65 is disordered; the sequence is NNSLSQEVQNAQHQREELERENNHLKEQQNGW. Polar residues predominate over residues 35-45; that stretch reads NSLSQEVQNAQ. The segment covering 46–60 has biased composition (basic and acidic residues); it reads HQREELERENNHLKE.

This sequence belongs to the ZapB family. Homodimer. The ends of the coiled-coil dimer bind to each other, forming polymers. Interacts with FtsZ.

The protein resides in the cytoplasm. Its function is as follows. Non-essential, abundant cell division factor that is required for proper Z-ring formation. It is recruited early to the divisome by direct interaction with FtsZ, stimulating Z-ring assembly and thereby promoting cell division earlier in the cell cycle. Its recruitment to the Z-ring requires functional FtsA or ZipA. The sequence is that of Cell division protein ZapB from Shigella boydii serotype 18 (strain CDC 3083-94 / BS512).